Reading from the N-terminus, the 238-residue chain is Purine nucleoside phosphorylase DeoD-type 1 (238 aa).

A purine D-ribonucleoside is bound at residue His-5. Residues Gly-21, Arg-25, Arg-44, and 88–91 contribute to the phosphate site; that span reads RVGS. A purine D-ribonucleoside contacts are provided by residues 180 to 182 and 204 to 205; these read EME and SD. Residue Asp-205 is the Proton donor of the active site.

It belongs to the PNP/UDP phosphorylase family. In terms of assembly, homohexamer; trimer of homodimers.

It catalyses the reaction a purine D-ribonucleoside + phosphate = a purine nucleobase + alpha-D-ribose 1-phosphate. The catalysed reaction is a purine 2'-deoxy-D-ribonucleoside + phosphate = a purine nucleobase + 2-deoxy-alpha-D-ribose 1-phosphate. Catalyzes the reversible phosphorolytic breakdown of the N-glycosidic bond in the beta-(deoxy)ribonucleoside molecules, with the formation of the corresponding free purine bases and pentose-1-phosphate. This chain is Purine nucleoside phosphorylase DeoD-type 1, found in Aliivibrio fischeri (strain ATCC 700601 / ES114) (Vibrio fischeri).